The chain runs to 430 residues: MALLHSGRVLPGIAAAFHPGLAAAASARASSWWTHVEMGPPDPILGVTEAFKRDTNSKKMNLGVGAYRDDNGKPYVLPSVRKAEAQIAAKNLDKEYLPIGGLAEFCKASAELALGENSEVLKSGRFVTVQTISGTGALRIGASFLQRFFKFSRDVFLPKPTWGNHTPIFRDAGMQLQGYRYYDPKTCGFDFTGAVEDISKIPEQSVLLLHACAHNPTGVDPRPEQWKEIATVVKKRNLFAFFDMAYQGFASGDGDKDAWAVRHFIEQGINVCLCQSYAKNMGLYGERVGAFTMVCKDADEAKRVESQLKILIRPMYSNPPLNGARIAAAILNTPDLRKQWLQEVKVMADRIIGMRTQLVSNLKKEGSTHNWQHITDQIGMFCFTGLKPEQVERLIKEFSIYMTKDGRISVAGVTSSNVGYLAHAIHQVTK.

Residues 1-29 (MALLHSGRVLPGIAAAFHPGLAAAASARA) constitute a mitochondrion transit peptide. Threonine 48 carries the post-translational modification Phosphothreonine. Lysine 59 carries the post-translational modification N6-acetyllysine. Glycine 65 provides a ligand contact to substrate. N6-acetyllysine; alternate is present on lysine 73. Lysine 73 carries the N6-succinyllysine; alternate modification. Residue lysine 82 is modified to N6-acetyllysine. Residue lysine 90 is modified to N6-acetyllysine; alternate. At lysine 90 the chain carries N6-succinyllysine; alternate. Residue tyrosine 96 is modified to 3'-nitrotyrosine; alternate. Tyrosine 96 is subject to Phosphotyrosine; alternate. 2 positions are modified to N6-acetyllysine; alternate: lysine 107 and lysine 122. N6-succinyllysine; alternate is present on residues lysine 107 and lysine 122. Phosphoserine is present on serine 143. At lysine 159 the chain carries N6-acetyllysine; alternate. Lysine 159 carries the post-translational modification N6-succinyllysine; alternate. A substrate-binding site is contributed by tryptophan 162. Position 185 is an N6-acetyllysine; alternate (lysine 185). At lysine 185 the chain carries N6-succinyllysine; alternate. Residue asparagine 215 participates in substrate binding. Lysine 227 is subject to N6-succinyllysine. Lysine 234 is modified (N6-acetyllysine). N6-acetyllysine; alternate occurs at positions 279 and 296. Residue lysine 279 is modified to N6-(pyridoxal phosphate)lysine; alternate. Position 296 is an N6-succinyllysine; alternate (lysine 296). Lysine 302 bears the N6-acetyllysine mark. Lysine 309 is subject to N6-acetyllysine; alternate. Lysine 309 is subject to N6-succinyllysine; alternate. Arginine 313 carries the post-translational modification Asymmetric dimethylarginine. The residue at position 333 (threonine 333) is a Phosphothreonine. An N6-acetyllysine; alternate modification is found at lysine 338. Lysine 338 is subject to N6-succinyllysine; alternate. The residue at position 345 (lysine 345) is an N6-acetyllysine. At lysine 363 the chain carries N6-acetyllysine; alternate. Lysine 363 is modified (N6-succinyllysine; alternate). 2 positions are modified to N6-acetyllysine: lysine 364 and lysine 387. An N6-acetyllysine; alternate mark is found at lysine 396 and lysine 404. N6-succinyllysine; alternate is present on residues lysine 396 and lysine 404. Arginine 407 contributes to the substrate binding site.

The protein belongs to the class-I pyridoxal-phosphate-dependent aminotransferase family. Homodimer. Pyridoxal 5'-phosphate serves as cofactor.

It is found in the mitochondrion matrix. Its subcellular location is the cell membrane. It carries out the reaction L-aspartate + 2-oxoglutarate = oxaloacetate + L-glutamate. The catalysed reaction is L-kynurenine + 2-oxoglutarate = kynurenate + L-glutamate + H2O. Catalyzes the irreversible transamination of the L-tryptophan metabolite L-kynurenine to form kynurenic acid (KA). As a member of the malate-aspartate shuttle, it has a key role in the intracellular NAD(H) redox balance. Is important for metabolite exchange between mitochondria and cytosol, and for amino acid metabolism. Facilitates cellular uptake of long-chain free fatty acids. This is Aspartate aminotransferase, mitochondrial from Homo sapiens (Human).